We begin with the raw amino-acid sequence, 295 residues long: Acetyl-coenzyme A carboxylase carboxyl transferase subunit beta (295 aa).

The 270-residue stretch at 25 to 294 folds into the CoA carboxyltransferase N-terminal domain; the sequence is VWTKCTSCEQ…PFNAEELSDT (270 aa). Zn(2+) is bound by residues cysteine 29, cysteine 32, cysteine 48, and cysteine 51. The segment at 29 to 51 adopts a C4-type zinc-finger fold; sequence CTSCEQVLYRDELKRHLEVCPKC.

It belongs to the AccD/PCCB family. Acetyl-CoA carboxylase is a heterohexamer composed of biotin carboxyl carrier protein (AccB), biotin carboxylase (AccC) and two subunits each of ACCase subunit alpha (AccA) and ACCase subunit beta (AccD). Zn(2+) serves as cofactor.

The protein resides in the cytoplasm. It catalyses the reaction N(6)-carboxybiotinyl-L-lysyl-[protein] + acetyl-CoA = N(6)-biotinyl-L-lysyl-[protein] + malonyl-CoA. The protein operates within lipid metabolism; malonyl-CoA biosynthesis; malonyl-CoA from acetyl-CoA: step 1/1. Its function is as follows. Component of the acetyl coenzyme A carboxylase (ACC) complex. Biotin carboxylase (BC) catalyzes the carboxylation of biotin on its carrier protein (BCCP) and then the CO(2) group is transferred by the transcarboxylase to acetyl-CoA to form malonyl-CoA. This chain is Acetyl-coenzyme A carboxylase carboxyl transferase subunit beta, found in Mannheimia succiniciproducens (strain KCTC 0769BP / MBEL55E).